The following is a 330-amino-acid chain: GTPase Obg (330 aa).

One can recognise an Obg domain in the interval 1–159; sequence MHFIDEVKIY…MWIHLSLKLL (159 aa). The OBG-type G domain occupies 160-327; the sequence is SDVGLVGLPN…IVKLALETIK (168 aa). GTP-binding positions include 166-173, 191-195, 212-215, 279-282, and 308-310; these read GLPNAGKS, FTTLV, DIPG, NKCD, and STC. Positions 173 and 193 each coordinate Mg(2+).

Belongs to the TRAFAC class OBG-HflX-like GTPase superfamily. OBG GTPase family. As to quaternary structure, monomer. Requires Mg(2+) as cofactor.

The protein localises to the cytoplasm. Its function is as follows. An essential GTPase which binds GTP, GDP and possibly (p)ppGpp with moderate affinity, with high nucleotide exchange rates and a fairly low GTP hydrolysis rate. Plays a role in control of the cell cycle, stress response, ribosome biogenesis and in those bacteria that undergo differentiation, in morphogenesis control. The sequence is that of GTPase Obg from Rickettsia conorii (strain ATCC VR-613 / Malish 7).